A 350-amino-acid chain; its full sequence is Ceramide synthase 1 (350 aa).

The residue at position 2 (Ala2) is an N-acetylalanine. Transmembrane regions (helical) follow at residues 53–73 (AHLA…WTAL), 103–123 (AWKL…LLGT), 148–168 (IAVA…ATVY), 176–196 (SVVM…SYAF), 239–259 (VANL…LYWF), and 287–307 (LLLL…AFAA). The 215-residue stretch at 97-311 (ARLPESAWKL…IVAFAAKVLT (215 aa)) folds into the TLC domain.

Post-translationally, acetylated. Deacetylation by SIRT3 increases enzyme activity and promotes mitochondrial ceramide accumulation. Expressed in brain, skeletal muscle, heart and perigonadal white adipose tissue.

Its subcellular location is the endoplasmic reticulum membrane. It carries out the reaction a sphingoid base + octadecanoyl-CoA = an N-octadecanoyl-sphingoid base + CoA + H(+). It catalyses the reaction sphinganine + octadecanoyl-CoA = N-(octadecanoyl)-sphinganine + CoA + H(+). The catalysed reaction is hexadecasphinganine + octadecanoyl-CoA = N-octadecanoylhexadecasphinganine + CoA + H(+). The enzyme catalyses sphing-4-enine + octadecanoyl-CoA = N-octadecanoylsphing-4-enine + CoA + H(+). It carries out the reaction heptadecasphing-4-enine + octadecanoyl-CoA = N-octadecanoyl-heptadecasphing-4-enine + CoA + H(+). It catalyses the reaction 2-hydroxyoctadecanoyl-CoA + sphinganine = N-(2-hydroxyoctadecanoyl)-sphinganine + CoA + H(+). The catalysed reaction is eicosanoyl-CoA + sphinganine = N-eicosanoylsphinganine + CoA + H(+). The protein operates within lipid metabolism; sphingolipid metabolism. With respect to regulation, inhibited by fumonisin B1. In terms of biological role, ceramide synthase that catalyzes the transfer of the acyl chain from acyl-CoA to a sphingoid base, with high selectivity toward stearoyl-CoA (octadecanoyl-CoA; C18:0-CoA). N-acylates sphinganine and sphingosine bases to form dihydroceramides and ceramides in de novo synthesis and salvage pathways, respectively. Plays a predominant role in skeletal muscle in regulating C18 ceramide and dihydroceramide levels with an impact on whole-body glucose metabolism and insulin sensitivity. Protects from diet-induced obesity by suppressing the uptake of glucose in multiple organs in a FGF21-dependent way. Generates C18 ceramides in the brain, playing a critical role in cerebellar development and Purkinje cell function. In response to cellular stress mediates mitophagy, a known defense mechanism against cell transformation and aging. Upon mitochondria fission, generates C18 ceramides that anchor lipidated MAP1LC3B/LC3B-II autophagolysosomes to outer mitochondrial membranes to eliminate damaged mitochondria. The chain is Ceramide synthase 1 from Mus musculus (Mouse).